Here is a 1042-residue protein sequence, read N- to C-terminus: Probable inorganic carbon transporter subunit DabA (1042 aa).

Zn(2+) is bound by residues Cys-462, Asp-464, His-721, and Cys-736.

The protein belongs to the inorganic carbon transporter (TC 9.A.2) DabA family. In terms of assembly, forms a complex with DabB. It depends on Zn(2+) as a cofactor.

The protein localises to the cell inner membrane. In terms of biological role, part of an energy-coupled inorganic carbon pump. The chain is Probable inorganic carbon transporter subunit DabA from Nitrosomonas eutropha (strain DSM 101675 / C91 / Nm57).